Here is a 121-residue protein sequence, read N- to C-terminus: Large ribosomal subunit protein bL12 (121 aa).

Belongs to the bacterial ribosomal protein bL12 family. As to quaternary structure, homodimer. Part of the ribosomal stalk of the 50S ribosomal subunit. Forms a multimeric L10(L12)X complex, where L10 forms an elongated spine to which 2 to 4 L12 dimers bind in a sequential fashion. Binds GTP-bound translation factors.

Forms part of the ribosomal stalk which helps the ribosome interact with GTP-bound translation factors. Is thus essential for accurate translation. This Escherichia coli O81 (strain ED1a) protein is Large ribosomal subunit protein bL12.